The chain runs to 219 residues: Transmembrane protein 17B (219 aa).

Asparagine 26 is a glycosylation site (N-linked (GlcNAc...) asparagine). Transmembrane regions (helical) follow at residues 51 to 71 (MMLYFNAFFFPFWIISEIITM), 84 to 104 (ILLTTSLVILTLVESLRLYIG), 116 to 136 (LAGFLILTLLIQLPLLLFLLT), and 147 to 167 (LAVHMIYLMFINAEIVISFLV). 2 N-linked (GlcNAc...) asparagine glycosylation sites follow: asparagine 195 and asparagine 203.

Belongs to the TMEM17 family. As to quaternary structure, part of the tectonic-like complex (also named B9 complex).

The protein localises to the cell projection. The protein resides in the cilium membrane. In terms of biological role, transmembrane component of the tectonic-like complex, a complex localized at the transition zone of primary cilia and acting as a barrier that prevents diffusion of transmembrane proteins between the cilia and plasma membranes. Required for ciliogenesis and sonic hedgehog/SHH signaling. The chain is Transmembrane protein 17B (Tmem17-b) from Xenopus tropicalis (Western clawed frog).